The following is a 214-amino-acid chain: Threonylcarbamoyl-AMP synthase (214 aa).

The region spanning 9 to 214 (TDSTIQAATW…GDALTGQVIR (206 aa)) is the YrdC-like domain.

The protein belongs to the SUA5 family. TsaC subfamily.

It localises to the cytoplasm. The catalysed reaction is L-threonine + hydrogencarbonate + ATP = L-threonylcarbamoyladenylate + diphosphate + H2O. Functionally, required for the formation of a threonylcarbamoyl group on adenosine at position 37 (t(6)A37) in tRNAs that read codons beginning with adenine. Catalyzes the conversion of L-threonine, HCO(3)(-)/CO(2) and ATP to give threonylcarbamoyl-AMP (TC-AMP) as the acyladenylate intermediate, with the release of diphosphate. This chain is Threonylcarbamoyl-AMP synthase, found in Psychrobacter cryohalolentis (strain ATCC BAA-1226 / DSM 17306 / VKM B-2378 / K5).